We begin with the raw amino-acid sequence, 502 residues long: Cytochrome P450 71B17 (502 aa).

A helical transmembrane segment spans residues 1–21; the sequence is MAISLLCLFLITFVSLTIVGC. C444 is a binding site for heme.

Belongs to the cytochrome P450 family. Heme is required as a cofactor.

It localises to the membrane. The sequence is that of Cytochrome P450 71B17 (CYP71B17) from Arabidopsis thaliana (Mouse-ear cress).